We begin with the raw amino-acid sequence, 441 residues long: MSETIAALATAYGIGSVSIVRLSGKDALATSLKLLKLSNLEPRYAKLAKIYSIDDEILDEGIVIYFKAPASFTGEDIVEFQTHGGVMVSERILNELIRAGARLAMPGEFSKRAFLNGKMDLAKAEAMQGLITSKSEIAAKILTRQMQGDLSKFVGEIRGEVVKTLAFVETMIDYADDDLPANLLEQTKLMLLKNSEKLERIATLSEQRRGLIDGFKIAIVGKPNVGKSSILNSFLAYERAIVSDEAGTTRDRIEENFKIGSHLVRIIDTAGIRKDAGKIEQIGINYSISAINEADIILAVFDGSCPSDEQDKEIIRLISNSNKKAFFILNKSDLAFKFDIELDGAIKISAKNDSSVVLKELEGYLKTQDTDEIMLSSNRQILSCKEASEALKRAFLRLNEEELEIFAYELNSAIKALASITKPFERSEILDEMFSHFCLGK.

Residues Arg21, Glu79, and Lys118 each coordinate (6S)-5-formyl-5,6,7,8-tetrahydrofolate. Residues 214–370 (GFKIAIVGKP…LEGYLKTQDT (157 aa)) form the TrmE-type G domain. Residues 224–229 (NVGKSS), 243–249 (SDEAGTT), and 268–271 (DTAG) contribute to the GTP site. Residues Ser228 and Thr249 each coordinate Mg(2+). Lys441 lines the (6S)-5-formyl-5,6,7,8-tetrahydrofolate pocket.

Belongs to the TRAFAC class TrmE-Era-EngA-EngB-Septin-like GTPase superfamily. TrmE GTPase family. Homodimer. Heterotetramer of two MnmE and two MnmG subunits. Requires K(+) as cofactor.

The protein resides in the cytoplasm. Its function is as follows. Exhibits a very high intrinsic GTPase hydrolysis rate. Involved in the addition of a carboxymethylaminomethyl (cmnm) group at the wobble position (U34) of certain tRNAs, forming tRNA-cmnm(5)s(2)U34. This is tRNA modification GTPase MnmE from Campylobacter concisus (strain 13826).